A 394-amino-acid chain; its full sequence is MAADGTGVVGGGAVGGGLPKDGLQDAKCPEPIPNRRRASSLSRDAQRRAYQWCREYLGGAWRRARPEELSVCPVSGGLSNLLFRCSLPNHVPSVGGEPREVLLRLYGAILQGVDSLVLESVMFAILAERSLGPQLYGVFPEGRLEQYLPSRPLKTQELRDPVLSGAIATRMARFHGMEMPFTKEPRWLFGTMERYLKQIQDLPSTSLPQMNLVEMYSLKDEMNSLRKLLDDTPSPVVFCHNDIQEGNILLLSEPDSDDNLMLVDFEYSSYNYRGFDIGNHFCEWVYDYTYEEWPFYKARPTDYPTREQQLHFIRHYLAEVQKGEILSEEEQKKREEELLLEISRYSLASHFFWGLWSTLQASMSTIEFGYLEYAQSRFQFYFQQKGQLTSSPSS.

Residues 1–42 (MAADGTGVVGGGAVGGGLPKDGLQDAKCPEPIPNRRRASSLS) are disordered. N-acetylalanine is present on alanine 2. The span at 7–19 (GVVGGGAVGGGLP) shows a compositional bias: gly residues. Residues 75–81 (SGGLSNL), arginine 104, 146–152 (QYLPSRP), glutamine 244, and aspartate 264 contribute to the ATP site. 77 to 79 (GLS) is a substrate binding site.

It belongs to the choline/ethanolamine kinase family. In terms of assembly, homodimer, and heterodimer with CHKA. In terms of tissue distribution, expressed ubiquitously with the highest level in testis.

The enzyme catalyses choline + ATP = phosphocholine + ADP + H(+). It catalyses the reaction ethanolamine + ATP = phosphoethanolamine + ADP + H(+). The protein operates within phospholipid metabolism; phosphatidylethanolamine biosynthesis; phosphatidylethanolamine from ethanolamine: step 1/3. Its function is as follows. Has a key role in phospholipid metabolism, and catalyzes the first step of phosphatidylethanolamine and phosphatidylcholine biosynthesis. The chain is Choline/ethanolamine kinase (Chkb) from Mus musculus (Mouse).